Here is a 768-residue protein sequence, read N- to C-terminus: Phosphoribosylformylglycinamidine synthase subunit PurL (768 aa).

His-48 is an active-site residue. ATP contacts are provided by Tyr-51 and Lys-90. Glu-92 is a Mg(2+) binding site. Residues 93–96 (SHNH) and Arg-115 contribute to the substrate site. His-94 acts as the Proton acceptor in catalysis. Asp-116 lines the Mg(2+) pocket. Position 239 (Gln-239) interacts with substrate. Asp-267 provides a ligand contact to Mg(2+). 311–313 (ESQ) serves as a coordination point for substrate. Residues Asp-507 and Gly-544 each coordinate ATP. Residue Asn-545 participates in Mg(2+) binding. Ser-547 contacts substrate.

The protein belongs to the FGAMS family. In terms of assembly, monomer. Part of the FGAM synthase complex composed of 1 PurL, 1 PurQ and 2 PurS subunits.

The protein localises to the cytoplasm. It carries out the reaction N(2)-formyl-N(1)-(5-phospho-beta-D-ribosyl)glycinamide + L-glutamine + ATP + H2O = 2-formamido-N(1)-(5-O-phospho-beta-D-ribosyl)acetamidine + L-glutamate + ADP + phosphate + H(+). It functions in the pathway purine metabolism; IMP biosynthesis via de novo pathway; 5-amino-1-(5-phospho-D-ribosyl)imidazole from N(2)-formyl-N(1)-(5-phospho-D-ribosyl)glycinamide: step 1/2. In terms of biological role, part of the phosphoribosylformylglycinamidine synthase complex involved in the purines biosynthetic pathway. Catalyzes the ATP-dependent conversion of formylglycinamide ribonucleotide (FGAR) and glutamine to yield formylglycinamidine ribonucleotide (FGAM) and glutamate. The FGAM synthase complex is composed of three subunits. PurQ produces an ammonia molecule by converting glutamine to glutamate. PurL transfers the ammonia molecule to FGAR to form FGAM in an ATP-dependent manner. PurS interacts with PurQ and PurL and is thought to assist in the transfer of the ammonia molecule from PurQ to PurL. This is Phosphoribosylformylglycinamidine synthase subunit PurL from Parasynechococcus marenigrum (strain WH8102).